Here is a 230-residue protein sequence, read N- to C-terminus: Calcyclin-binding protein (230 aa).

An interaction with SIAH1 region spans residues 1-82 (MSSALEELQK…YTVKISNYGW (82 aa)). Phosphoserine is present on S3. N6-acetyllysine is present on residues K10 and K21. S36 is modified (phosphoserine). A disordered region spans residues 38 to 59 (IETEMKNKMQQKSQRKAELTEN). One can recognise a CS domain in the interval 75-169 (VKISNYGWDQ…AENTRWDYLT (95 aa)). Positions 75–230 (VKISNYGWDQ…EKQAKGDTDF (156 aa)) are interaction with SKP1. N6-acetyllysine is present on residues K87 and K120. The tract at residues 156–230 (CRKKAENTRW…EKQAKGDTDF (75 aa)) is interaction with S100A6. One can recognise an SGS domain in the interval 170–230 (QVEKECKEKE…EKQAKGDTDF (61 aa)).

As to quaternary structure, monomer or homodimer. Component of some large E3 complex at least composed of UBE2D1, SIAH1, CACYBP/SIP, SKP1, APC and TBL1X. Interacts directly with SIAH1, SIAH2 and SKP1. Interacts with proteins of the S100 family S100A1, S100A6, S100B, S100P and S100A12 in a calcium-dependent manner. In terms of processing, phosphorylated on serine residues. Phosphorylated upon induction by RA or at high calcium concentrations.

The protein localises to the nucleus. The protein resides in the cytoplasm. In terms of biological role, may be involved in calcium-dependent ubiquitination and subsequent proteasomal degradation of target proteins. Probably serves as a molecular bridge in ubiquitin E3 complexes. Participates in the ubiquitin-mediated degradation of beta-catenin (CTNNB1). This chain is Calcyclin-binding protein (CACYBP), found in Bos taurus (Bovine).